Consider the following 509-residue polypeptide: Maturase K (509 aa).

This sequence belongs to the intron maturase 2 family. MatK subfamily.

It localises to the plastid. Its subcellular location is the chloroplast. Usually encoded in the trnK tRNA gene intron. Probably assists in splicing its own and other chloroplast group II introns. This Citrus sinensis (Sweet orange) protein is Maturase K.